A 438-amino-acid chain; its full sequence is Adenosylhomocysteinase (438 aa).

Substrate is bound by residues threonine 64, aspartate 139, and glutamate 164. 165–167 provides a ligand contact to NAD(+); that stretch reads TTT. The substrate site is built by lysine 194 and aspartate 198. NAD(+) is bound by residues asparagine 199, 228-233, glutamate 251, asparagine 286, 307-309, and asparagine 352; these read GYGDVG and IGH.

Belongs to the adenosylhomocysteinase family. The cofactor is NAD(+).

Its subcellular location is the cytoplasm. The catalysed reaction is S-adenosyl-L-homocysteine + H2O = L-homocysteine + adenosine. It participates in amino-acid biosynthesis; L-homocysteine biosynthesis; L-homocysteine from S-adenosyl-L-homocysteine: step 1/1. Functionally, may play a key role in the regulation of the intracellular concentration of adenosylhomocysteine. This Coxiella burnetii (strain Dugway 5J108-111) protein is Adenosylhomocysteinase.